The sequence spans 369 residues: ATP-dependent (S)-NAD(P)H-hydrate dehydratase (369 aa).

A YjeF C-terminal domain is found at 14–356; it reads LFQKARKLVP…DEVHESFLTL (343 aa). Residues G126 and 179–185 each bind (6S)-NADPHX; that span reads NVNEFSR. ATP contacts are provided by residues 231–235 and 250–259; these read KGPHD and GGLKRSGGQG. Position 260 (D260) interacts with (6S)-NADPHX. Basic and acidic residues predominate over residues 284 to 306; that stretch reads GEQEHSKEAENKEEVQGELESNK. The disordered stretch occupies residues 284–307; that stretch reads GEQEHSKEAENKEEVQGELESNKR.

Belongs to the NnrD/CARKD family. It depends on Mg(2+) as a cofactor.

The protein resides in the cytoplasm. The catalysed reaction is (6S)-NADHX + ATP = ADP + phosphate + NADH + H(+). It catalyses the reaction (6S)-NADPHX + ATP = ADP + phosphate + NADPH + H(+). Its function is as follows. Catalyzes the dehydration of the S-form of NAD(P)HX at the expense of ATP, which is converted to ADP. Together with NAD(P)HX epimerase, which catalyzes the epimerization of the S- and R-forms, the enzyme allows the repair of both epimers of NAD(P)HX, a damaged form of NAD(P)H that is a result of enzymatic or heat-dependent hydration. The polypeptide is ATP-dependent (S)-NAD(P)H-hydrate dehydratase (Emericella nidulans (strain FGSC A4 / ATCC 38163 / CBS 112.46 / NRRL 194 / M139) (Aspergillus nidulans)).